The sequence spans 52 residues: Large ribosomal subunit protein bL32c (52 aa).

Belongs to the bacterial ribosomal protein bL32 family.

It is found in the plastid. The protein localises to the chloroplast. The protein is Large ribosomal subunit protein bL32c of Morus indica (Mulberry).